A 608-amino-acid polypeptide reads, in one-letter code: ABC transporter ATP-binding protein RamB (608 aa).

5 helical membrane-spanning segments follow: residues 25-45 (GVLV…FLVG), 66-86 (LWLG…RGVF), 141-161 (GLVL…LGLL), 166-186 (ALLV…LVTL), and 253-273 (AALG…VEWL). Residues 30 to 296 (LALWSLAESG…FTYLVQSLLP (267 aa)) enclose the ABC transmembrane type-1 domain. Residues 321–362 (GPEPEPEPEPEPEPEPELGSGLEPEPEPASEPESGPSTASAS) form a disordered region. Residues 324–336 (PEPEPEPEPEPEP) show a composition bias toward acidic residues. A compositionally biased stretch (low complexity) spans 351 to 362 (EPESGPSTASAS). In terms of domain architecture, ABC transporter spans 376 to 605 (VELRSVTLSY…SPLYRDLTGH (230 aa)). 410 to 417 (GPSGIGKS) is a binding site for ATP.

The protein belongs to the ABC transporter superfamily.

Its subcellular location is the cell membrane. Probably involved in exporting SapB from the cell. Expression of the ram locus (ramA, ramB and ramR) induces rapid aerial mycelium formation in S.lividans. The chain is ABC transporter ATP-binding protein RamB from Streptomyces coelicolor (strain ATCC BAA-471 / A3(2) / M145).